Reading from the N-terminus, the 79-residue chain is Small ribosomal subunit protein bS16 (79 aa).

It belongs to the bacterial ribosomal protein bS16 family.

This Marinobacter nauticus (strain ATCC 700491 / DSM 11845 / VT8) (Marinobacter aquaeolei) protein is Small ribosomal subunit protein bS16.